The following is a 599-amino-acid chain: Elongation factor 4 (599 aa).

The tr-type G domain maps to 2-184 (NHIRNFSIIA…RLVRDIPAPE (183 aa)). Residues 14–19 (DHGKST) and 131–134 (NKID) each bind GTP.

It belongs to the TRAFAC class translation factor GTPase superfamily. Classic translation factor GTPase family. LepA subfamily.

The protein localises to the cell inner membrane. The catalysed reaction is GTP + H2O = GDP + phosphate + H(+). Its function is as follows. Required for accurate and efficient protein synthesis under certain stress conditions. May act as a fidelity factor of the translation reaction, by catalyzing a one-codon backward translocation of tRNAs on improperly translocated ribosomes. Back-translocation proceeds from a post-translocation (POST) complex to a pre-translocation (PRE) complex, thus giving elongation factor G a second chance to translocate the tRNAs correctly. Binds to ribosomes in a GTP-dependent manner. The protein is Elongation factor 4 of Yersinia pestis (strain Pestoides F).